The primary structure comprises 953 residues: Coatomer subunit beta-1 (953 aa).

HEAT repeat units follow at residues 49-87 (ETLP…RDVA), 93-127 (PEMI…LNEP), 128-165 (ELLE…LPHG), 314-351 (DVMV…PRNV), and 393-430 (EVAG…TNPK).

In terms of assembly, oligomeric complex that consists of at least the alpha, beta, beta', gamma, delta, epsilon and zeta subunits.

The protein localises to the cytoplasm. The protein resides in the golgi apparatus membrane. It is found in the cytoplasmic vesicle. It localises to the COPI-coated vesicle membrane. The coatomer is a cytosolic protein complex that binds to dilysine motifs and reversibly associates with Golgi non-clathrin-coated vesicles, which further mediate biosynthetic protein transport from the ER, via the Golgi up to the trans Golgi network. Coatomer complex is required for budding from Golgi membranes, and is essential for the retrograde Golgi-to-ER transport of dilysine-tagged proteins. The protein is Coatomer subunit beta-1 of Oryza sativa subsp. japonica (Rice).